The sequence spans 181 residues: Isopentenyl-diphosphate Delta-isomerase (181 aa).

Mn(2+) contacts are provided by H25 and H32. Residues 30–164 (LLHLAFSCWL…PWAFSPWMVL (135 aa)) enclose the Nudix hydrolase domain. The active site involves C67. Position 69 (H69) interacts with Mn(2+). Mg(2+) is bound at residue E87. E114 and E116 together coordinate Mn(2+). Residue E116 is part of the active site.

The protein belongs to the IPP isomerase type 1 family. As to quaternary structure, homodimer. It depends on Mg(2+) as a cofactor. Mn(2+) serves as cofactor.

It localises to the cytoplasm. The enzyme catalyses isopentenyl diphosphate = dimethylallyl diphosphate. It participates in isoprenoid biosynthesis; dimethylallyl diphosphate biosynthesis; dimethylallyl diphosphate from isopentenyl diphosphate: step 1/1. Its function is as follows. Catalyzes the 1,3-allylic rearrangement of the homoallylic substrate isopentenyl (IPP) to its highly electrophilic allylic isomer, dimethylallyl diphosphate (DMAPP). This chain is Isopentenyl-diphosphate Delta-isomerase, found in Citrobacter koseri (strain ATCC BAA-895 / CDC 4225-83 / SGSC4696).